Reading from the N-terminus, the 535-residue chain is T-complex protein 1 subunit beta (535 aa).

Ala2 bears the N-acetylalanine mark. Ser3 carries the post-translational modification Phosphoserine. Lys13 is modified (N6-acetyllysine). Residue Gly44 coordinates ADP. Gly44 is an ATP binding site. Ser60 carries the post-translational modification Phosphoserine. Mg(2+) is bound at residue Asp97. ADP-binding residues include Gly98, Thr99, Thr100, and Ser101. Residues Gly98, Thr99, and Thr100 each coordinate ATP. Lys154 is subject to N6-acetyllysine. Residues Ser168 and Ser169 each coordinate ADP. The residue at position 181 (Lys181) is an N6-acetyllysine. Lys248 is covalently cross-linked (Glycyl lysine isopeptide (Lys-Gly) (interchain with G-Cter in SUMO2)). Phosphoserine is present on Ser260. The residue at position 261 (Thr261) is a Phosphothreonine. 3 residues coordinate ADP: Gly410, Glu495, and Lys500. ATP contacts are provided by Glu495 and Lys500.

The protein belongs to the TCP-1 chaperonin family. Component of the chaperonin-containing T-complex (TRiC), a hexadecamer composed of two identical back-to-back stacked rings enclosing a protein folding chamber. Each ring is made up of eight different subunits: TCP1/CCT1, CCT2, CCT3, CCT4, CCT5, CCT6A/CCT6, CCT7, CCT8. Interacts with PACRG. Interacts with FLCN. Interacts with DLEC1. Interacts with SVEP1.

The protein localises to the cytoplasm. The enzyme catalyses ATP + H2O = ADP + phosphate + H(+). In terms of biological role, component of the chaperonin-containing T-complex (TRiC), a molecular chaperone complex that assists the folding of actin, tubulin and other proteins upon ATP hydrolysis. The TRiC complex mediates the folding of WRAP53/TCAB1, thereby regulating telomere maintenance. As part of the TRiC complex may play a role in the assembly of BBSome, a complex involved in ciliogenesis regulating transports vesicles to the cilia. The protein is T-complex protein 1 subunit beta (CCT2) of Bos taurus (Bovine).